We begin with the raw amino-acid sequence, 542 residues long: Thermosome subunit alpha (542 aa).

It belongs to the TCP-1 chaperonin family. In terms of assembly, forms a Heterooligomeric complex of two stacked eight-membered rings.

Functionally, molecular chaperone; binds unfolded polypeptides in vitro, and has a weak ATPase activity. The sequence is that of Thermosome subunit alpha (thsA) from Methanothermobacter thermautotrophicus (strain ATCC 29096 / DSM 1053 / JCM 10044 / NBRC 100330 / Delta H) (Methanobacterium thermoautotrophicum).